The sequence spans 400 residues: Tryptophan--tRNA ligase, cytoplasmic (400 aa).

A 'HIGH' region motif is present at residues 95 to 104 (PSSGSLHFGH). The short motif at 281 to 285 (KMSAS) is the 'KMSKS' region element.

It belongs to the class-I aminoacyl-tRNA synthetase family.

It localises to the cytoplasm. The enzyme catalyses tRNA(Trp) + L-tryptophan + ATP = L-tryptophyl-tRNA(Trp) + AMP + diphosphate + H(+). The sequence is that of Tryptophan--tRNA ligase, cytoplasmic (trpS) from Dictyostelium discoideum (Social amoeba).